An 863-amino-acid chain; its full sequence is Leucine--tRNA ligase (863 aa).

The 'HIGH' region signature appears at 42-52; that stretch reads PYPSGKLHMGH. The short motif at 623 to 627 is the 'KMSKS' region element; that stretch reads KMSKS. Lys-626 is a binding site for ATP.

This sequence belongs to the class-I aminoacyl-tRNA synthetase family.

Its subcellular location is the cytoplasm. It carries out the reaction tRNA(Leu) + L-leucine + ATP = L-leucyl-tRNA(Leu) + AMP + diphosphate. This Paraburkholderia xenovorans (strain LB400) protein is Leucine--tRNA ligase.